We begin with the raw amino-acid sequence, 382 residues long: Cysteine desulfurase IscS 1 (382 aa).

A pyridoxal 5'-phosphate-binding site is contributed by Asn149. Cys321 acts as the Cysteine persulfide intermediate in catalysis. Cys321 contributes to the [2Fe-2S] cluster binding site.

The protein belongs to the class-V pyridoxal-phosphate-dependent aminotransferase family. NifS/IscS subfamily. Homodimer. Forms a heterotetramer with IscU, interacts with other sulfur acceptors. Pyridoxal 5'-phosphate is required as a cofactor.

It is found in the cytoplasm. The catalysed reaction is (sulfur carrier)-H + L-cysteine = (sulfur carrier)-SH + L-alanine. Its pathway is cofactor biosynthesis; iron-sulfur cluster biosynthesis. Master enzyme that delivers sulfur to a number of partners involved in Fe-S cluster assembly, tRNA modification or cofactor biosynthesis. Catalyzes the removal of elemental sulfur atoms from cysteine to produce alanine. Functions as a sulfur delivery protein for Fe-S cluster synthesis onto IscU, an Fe-S scaffold assembly protein, as well as other S acceptor proteins. The protein is Cysteine desulfurase IscS 1 of Archaeoglobus fulgidus (strain ATCC 49558 / DSM 4304 / JCM 9628 / NBRC 100126 / VC-16).